The following is a 1941-amino-acid chain: MSSDSELAVFGEAAPFLRKSERERIEAQNRPFDAKTSVFVAEPKESFVKGTIQSREGGKVTVKTEGGATLTVKDDQVFPMNPPKYDKIEDMAMMTHLHEPAVLYNLKERYAAWMIYTYSGLFCVTVNPYKWLPVYKPEVVTAYRGKKRQEAPPHIFSISDNAYQFMLTDRENQSILITGESGAGKTVNTKRVIQYFATIAVTGEKKKEEITSGKIQGTLEDQIISANPLLEAFGNAKTVRNDNSSRFGKFIRIHFGTTGKLASADIETYLLEKSRVVFQLKAERSYHIFYQITSNKKPELIEMLLITTNPYDYPFVSQGEISVASIDDQEELMATDSAIDILGFTNEEKVSIYKLTGAVMHYGNLKFKQKQREEQAEPDGTEVADKAAYLQSLNSADLLKALCYPRVKVGNEYVTKGQTVEQVSNAVGALAKAVYEKMFLWMVARINQQLDTKQPRQYFIGVLDIAGFEIFDFNSLEQLCINFTNEKLQQFFNHHMFVLEQEEYKKEGIEWTFIDFGMDLAACIELIEKPMGIFSILEEECMFPKATDTSFKNKLYDQHLGKSANFQKPKVVKGKAEAHFALIHYAGVVDYNITGWLEKNKDPLNETVVGLYQKSAMKTLAQLFSGAQTAEGEGAGGGAKKGGKKKGSSFQTVSALFRENLNKLMTNLRSTHPHFVRCIIPNETKTPGAMEHELVLHQLRCNGVLEGIRICRKGFPSRILYADFKQRYKVLNASAIPEGQFIDSKKASEKLLASIDIDHTQYKFGHTKVFFKAGLLGLLEEMRDDKLAQLITRTQARCRGFLARVEYQRMVERREAIFCIQYNIRSFMNVKHWPWMKLFFKIKPLLKSAETEKEMATMKEEFQKIKDELAKSEAKRKELEEKMVTLLKEKNDLQLQVQAEAEGLADAEERCDQLIKTKIQLEAKIKEVTERAEDEEEINAELTAKKRKLEDECSELKKDIDDLELTLAKVEKEKHATENKVKNLTEEMAGLDETIAKLTKEKKALQEAHQQTLDDLQAEEDKVNTLTKAKIKLEQQVDDLEGSLEQEKKLRMDLERAKRKLEGDLKLAQESIMDIENEKQQLDEKLKKKEFEISNLQSKIEDEQALGIQLQKKIKELQARIEELEEEIEAERASRAKAEKQRSDLSRELEEISERLEEAGGATSAQIEMNKKREAEFQKMRRDLEEATLQHEATAATLRKKHADSVAELGEQIDNLQRVKQKLEKEKSEMKMEIDDLASNVETVSKAKGNLEKMCRTLEDQLSELKSKEEEQQRLINDLTAQRGRLQTESGEFSRQLDEKEALVSQLSRGKQAFTQQIEELKRQLEEEIKAKNALAHALQSSRHDCDLLREQYEEEQESKAELQRALSKANTEVAQWRTKYETDAIQRTEELEEAKKKLAQRLQAAEEHVEAVNAKCASLEKTKQRLQNEVEDLMLDVERTNAACAALDKKQRNFDKILAEWKQKCEETHAELEASQKEARSLGTELFKIKNAYEESLDQLETLKRENKNLQQEISDLTEQIAEGGKRIHELEKIKKQVEQEKCELQAALEEAEASLEHEEGKILRIQLELNQVKSEVDRKIAEKDEEIDQLKRNHIRIVESMQSTLDAEIRSRNDAIRLKKKMEGDLNEMEIQLNHANRMAAEALRNYRNTQGILKDTQIHLDDALRSQEDLKEQLAMVERRANLLQAEIEELRATLEQTERSRKIAEQELLDASERVQLLHTQNTSLINTKKKLETDISQMQGEMEDILQEARNAEEKAKKAITDAAMMAEELKKEQDTSAHLERMKKNMEQTVKDLQLRLDEAEQLALKGGKKQIQKLEARVRELEGEVESEQKRNAEAVKGLRKHERRVKELTYQTEEDRKNILRLQDLVDKLQAKVKSYKRQAEEAEEQSNTNLAKFRKLQHELEEAEERADIAESQVNKLRVKSREVHTKVISEE.

Residues 33-82 form the Myosin N-terminal SH3-like domain; that stretch reads DAKTSVFVAEPKESFVKGTIQSREGGKVTVKTEGGATLTVKDDQVFPMNP. Phosphothreonine occurs at positions 64 and 69. The Myosin motor domain maps to 86–784; that stretch reads DKIEDMAMMT…LLGLLEEMRD (699 aa). N6,N6,N6-trimethyllysine is present on Lys130. 179–186 serves as a coordination point for ATP; that stretch reads GESGAGKT. At Tyr389 the chain carries Phosphotyrosine. Residue Ser392 is modified to Phosphoserine. Thr419 carries the phosphothreonine modification. Ser625 bears the Phosphoserine mark. Positions 661-683 are actin-binding; that stretch reads LNKLMTNLRSTHPHFVRCIIPNE. His759 is subject to Pros-methylhistidine. Positions 763-777 are actin-binding; it reads KFGHTKVFFKAGLLG. Positions 787–816 constitute an IQ domain; the sequence is LAQLITRTQARCRGFLARVEYQRMVERREA. A coiled-coil region spans residues 845 to 1941; it reads LLKSAETEKE…EVHTKVISEE (1097 aa). Residues Ser1094 and Ser1098 each carry the phosphoserine modification. Disordered regions lie at residues 1128-1149 and 1155-1174; these read IEAE…SREL and RLEE…KKRE. The segment covering 1130–1149 has biased composition (basic and acidic residues); it reads AERASRAKAEKQRSDLSREL. Residues Ser1164 and Ser1239 each carry the phosphoserine modification. The residue at position 1243 (Thr1243) is a Phosphothreonine. Phosphoserine is present on Ser1245. Phosphothreonine is present on Thr1257. Position 1263 is a phosphoserine (Ser1263). Thr1288 carries the phosphothreonine modification. 4 positions are modified to phosphoserine: Ser1290, Ser1294, Ser1305, and Ser1308. Residue Thr1469 is modified to Phosphothreonine. Ser1476 carries the phosphoserine modification. Tyr1494 is subject to Phosphotyrosine. Phosphoserine is present on Ser1497. The residue at position 1503 (Thr1503) is a Phosphothreonine. At Ser1516 the chain carries Phosphoserine. Position 1519 is a phosphothreonine (Thr1519). Ser1556, Ser1576, Ser1602, Ser1605, Ser1716, and Ser1728 each carry phosphoserine. A phosphothreonine mark is found at Thr1732 and Thr1738. Ser1741 carries the post-translational modification Phosphoserine.

Belongs to the TRAFAC class myosin-kinesin ATPase superfamily. Myosin family. Muscle myosin is a hexameric protein that consists of 2 heavy chain subunits (MHC), 2 alkali light chain subunits (MLC) and 2 regulatory light chain subunits (MLC-2). Interacts with GCSAM.

It is found in the cytoplasm. Its subcellular location is the myofibril. Its function is as follows. Myosins are actin-based motor molecules with ATPase activity essential for muscle contraction. The protein is Myosin-2 of Homo sapiens (Human).